We begin with the raw amino-acid sequence, 118 residues long: Large ribosomal subunit protein bL20 (118 aa).

It belongs to the bacterial ribosomal protein bL20 family.

In terms of biological role, binds directly to 23S ribosomal RNA and is necessary for the in vitro assembly process of the 50S ribosomal subunit. It is not involved in the protein synthesizing functions of that subunit. The polypeptide is Large ribosomal subunit protein bL20 (Desulforamulus reducens (strain ATCC BAA-1160 / DSM 100696 / MI-1) (Desulfotomaculum reducens)).